Consider the following 50-residue polypeptide: Protein HokA (50 aa).

Residues 7–24 (LLSLIVICFTLLFFTWMI) traverse the membrane as a helical segment.

This sequence belongs to the Hok/Gef family.

It localises to the cell inner membrane. Its function is as follows. Toxic component of a type I toxin-antitoxin (TA) system. When overexpressed kills cells within minutes; causes collapse of the transmembrane potential and arrest of respiration. Its toxic effect is probably neutralized by antisense antitoxin RNA SokA. This chain is Protein HokA, found in Escherichia coli (strain K12).